A 743-amino-acid polypeptide reads, in one-letter code: Polyribonucleotide nucleotidyltransferase (743 aa).

2 residues coordinate Mg(2+): aspartate 494 and aspartate 500. In terms of domain architecture, KH spans 561–620 (PQHAEVFVNPDIIRLIIGPGGKNIKAITAATGASVDIEDSGRVSIFAPTAEALEKAREMV). The 75-residue stretch at 630–704 (GKNYNAKVRK…SRKAVLLEEQ (75 aa)) folds into the S1 motif domain. The segment at 702–743 (EEQGHPWNPEDTARPQRSDRGDRGDRRGDRGGRDRRDRGDRR) is disordered. A compositionally biased stretch (basic and acidic residues) spans 712–743 (DTARPQRSDRGDRGDRRGDRGGRDRRDRGDRR).

Belongs to the polyribonucleotide nucleotidyltransferase family. Mg(2+) serves as cofactor.

The protein resides in the cytoplasm. It carries out the reaction RNA(n+1) + phosphate = RNA(n) + a ribonucleoside 5'-diphosphate. Its function is as follows. Involved in mRNA degradation. Catalyzes the phosphorolysis of single-stranded polyribonucleotides processively in the 3'- to 5'-direction. The polypeptide is Polyribonucleotide nucleotidyltransferase (Desulfovibrio desulfuricans (strain ATCC 27774 / DSM 6949 / MB)).